Here is a 264-residue protein sequence, read N- to C-terminus: Somatomedin-B and thrombospondin type-1 domain-containing protein (264 aa).

An N-terminal signal peptide occupies residues 1 to 20 (MRTLWMALCALSRLWPGAQA). One can recognise an SMB domain in the interval 24-75 (EAGRCCPGRDPACFARGWRLDRVYGTCFCDQACRFTGDCCFDYDRACPARPC). Intrachain disulfides connect Cys-28–Cys-36, Cys-28–Cys-52, Cys-36–Cys-70, Cys-50–Cys-52, Cys-50–Cys-63, Cys-56–Cys-62, and Cys-63–Cys-70. Positions 74 to 127 (PCFVGEWSPWSGCADQCKPTTRVRRRSVQQEPQNGGAPCPPLEERAGCLEYSTP) constitute a TSP type-1 domain. An N-linked (GlcNAc...) asparagine glycan is attached at Asn-227.

The protein belongs to the thrombospondin family. In terms of tissue distribution, detected in aorta extracellular matrix (at protein level).

The protein resides in the secreted. It is found in the extracellular space. Its subcellular location is the extracellular matrix. This Homo sapiens (Human) protein is Somatomedin-B and thrombospondin type-1 domain-containing protein (SBSPON).